A 504-amino-acid chain; its full sequence is MAGKLGKFQMLGFQHWKGLTSDNHLGAIFQQAPQKATNLMVQLLAFYRGKSLDTFLNSFPTREFEDDNEYYWDVIGSSRRNIPLVEARDENGVVVAANAANVGVGTSPFYLVFPEDWFADGEVIVGNLNQVYPFRILGDARMEGTNAVYKVELMGGNTQGVPAERLQQGERFSIEFAPVEKELSRKVGDVRFTSPVSMRNEWTTIRIQHKVAGNKLNKKLAMGIPMVRNLESGKQVKDTANMWMHYVDWEVELQFDEYKNNAMAWGTSNRNLNGEYMNFGKSGNAIKTGAGIFEQTEVANTMYYNTFSLKLLEDALYELSASKLAMDDRLFVIKTGERGAIQFHKEVLKTVSGWTTFVLDNNSTRVVEKVQSRLHSNALSAGFQFVEYKAPNGVRVRLDVDPFYDDPVRNKILHPMGGVAFSYRYDIWYIGTMDQPNIFKCKIKGDNEYRGYQWGIRNPFTGQKGNPYMSFDEDSAVIHRMATLGVCVLDPTRTMSLIPAILQG.

As to quaternary structure, interacts with the auxiliary capsid protein (via FD region). Interacts with the head fiber dimeric protein. Interacts with the head fiber trimeric protein. Interacts with the portal vertex auxiliary protein.

The protein resides in the virion. Functionally, capsid protein self-assembles to form an icosahedral capsid, with a T=9 symmetry, about 77 nm in diameter. Each asymmetric capsid nonamer is covered by 9 capsid auxiliary protein, 1 copy of the trimeric head fiber protein and 2 copies of the dimeric head fiber protein. This chain is Major capsid protein, found in Bacteroides intestinalis (Bacteroides phage PhiCrAss001).